Consider the following 990-residue polypeptide: Serine/threonine-protein phosphatase 6 regulatory ankyrin repeat subunit B (990 aa).

ANK repeat units lie at residues 7–36 (ADQP…DVNA), 40–69 (EKRT…RVNA), 73–102 (MWLT…DVNA), 106–135 (NWQT…SVNV), 139–168 (GGRT…NINA), 172–201 (KDRR…EVTC), 205–234 (KGYT…EIDE), 238–267 (YGNT…NVNQ), 271–301 (NGFT…DVNI), 305–334 (DGKS…EIDC), 338–367 (DGNT…DTAK), 371–400 (HNMF…EIDT), 404–433 (FGRT…DFNK), 437–466 (RGRT…NINE), 470–499 (WGRT…NAEE), 531–560 (EGYN…NMFE), 566–595 (ATKS…DLDI), 599–628 (KGRT…SVTV), 633–662 (TKRT…NPDV), 666–695 (KGQT…SVDA), 699–728 (LGCT…SILC), 732–761 (RGRT…SEED), 768–797 (QGYT…FRKF), 800–829 (NSFS…ASIV), 835–864 (KGRT…QVNA), 868–898 (AGKT…DLTL), 902–931 (DSNT…EQSL), and 938–967 (SLQT…CVLA).

Protein phosphatase 6 (PP6) holoenzyme is proposed to be a heterotrimeric complex formed by the catalytic subunit, a SAPS domain-containing subunit (PP6R) and an ankyrin repeat-domain containing regulatory subunit (ARS).

Functionally, putative regulatory subunit of protein phosphatase 6 (PP6) that may be involved in the recognition of phosphoprotein substrates. The chain is Serine/threonine-protein phosphatase 6 regulatory ankyrin repeat subunit B (ANKRD44) from Gallus gallus (Chicken).